Here is a 185-residue protein sequence, read N- to C-terminus: Ribosome-recycling factor (185 aa).

It belongs to the RRF family.

The protein localises to the cytoplasm. Its function is as follows. Responsible for the release of ribosomes from messenger RNA at the termination of protein biosynthesis. May increase the efficiency of translation by recycling ribosomes from one round of translation to another. In Pseudomonas paraeruginosa (strain DSM 24068 / PA7) (Pseudomonas aeruginosa (strain PA7)), this protein is Ribosome-recycling factor.